A 176-amino-acid chain; its full sequence is ATP synthase subunit d, mitochondrial (176 aa).

In terms of assembly, F-type ATP synthases have 2 components, the catalytic core F(1) and the membrane-embedded component F(0), linked together by a central stalk and a peripheral stalk. The central stalk, also called rotor shaft, is often seen as part of F(1). The peripheral stalk is seen as part of F(0). F(0) contains the membrane channel next to the rotor. F-type ATP synthases form dimers but each monomer functions independently in ATP generation. The dimer consists of 17 different polypeptides: ATP1 (subunit alpha, 3 molecules per monomer, part of F(1)), ATP2 (subunit beta, 3 copies per monomer, part of F(1)), ATP3 (subunit gamma, part of the central stalk), ATP4 (subunit b, part of the peripheral stalk), ATP5/OSCP (subunit 5/OSCP, part of the peripheral stalk), ATP6 (subunit a, part of the peripheral stalk), ATP7 (subunit d, part of the peripheral stalk), ATP8 (subunit 8, part of the peripheral stalk), OLI1 (subunit c, part of the rotor, 10 molecules per monomer), ATP14 (subunit h, part of the peripheral stalk), ATP15 (subunit epsilon, part of the central stalk), ATP16 (subunit delta, part of the central stalk), ATP17 (subunit f, part of the peripheral stalk), ATP18 (subunit i/j, part of the peripheral stalk), ATP19 (subunit k, dimer-specific, at interface between monomers), ATP20 (subunit g, at interface between monomers), TIM11 (subunit e, at interface between monomers).

Its subcellular location is the mitochondrion inner membrane. In terms of biological role, mitochondrial membrane ATP synthase (F(1)F(0) ATP synthase or Complex V) produces ATP from ADP in the presence of a proton gradient across the membrane which is generated by electron transport complexes of the respiratory chain. F-type ATP synthases consist of two structural domains, F(1) - containing the extramembraneous catalytic core, and F(0) - containing the membrane proton channel, linked together by a central stalk and a peripheral stalk. During catalysis, ATP synthesis in the catalytic domain of F(1) is coupled via a rotary mechanism of the central stalk subunits to proton translocation. Part of the complex F(0) domain and the peripheral stalk, which acts as a stator to hold the catalytic alpha/ATP1(3)beta/ATP2(3) subcomplex and subunit a/ATP6 static relative to the rotary elements. The polypeptide is ATP synthase subunit d, mitochondrial (Yarrowia lipolytica (strain CLIB 122 / E 150) (Yeast)).